The chain runs to 93 residues: Large ribosomal subunit protein uL23 (93 aa).

It belongs to the universal ribosomal protein uL23 family. Part of the 50S ribosomal subunit. Contacts protein L29, and trigger factor when it is bound to the ribosome.

In terms of biological role, one of the early assembly proteins it binds 23S rRNA. One of the proteins that surrounds the polypeptide exit tunnel on the outside of the ribosome. Forms the main docking site for trigger factor binding to the ribosome. The chain is Large ribosomal subunit protein uL23 from Helicobacter pylori (strain P12).